Consider the following 187-residue polypeptide: Elongation factor P (187 aa).

The protein belongs to the elongation factor P family.

It localises to the cytoplasm. The protein operates within protein biosynthesis; polypeptide chain elongation. Involved in peptide bond synthesis. Stimulates efficient translation and peptide-bond synthesis on native or reconstituted 70S ribosomes in vitro. Probably functions indirectly by altering the affinity of the ribosome for aminoacyl-tRNA, thus increasing their reactivity as acceptors for peptidyl transferase. This is Elongation factor P from Syntrophus aciditrophicus (strain SB).